Reading from the N-terminus, the 618-residue chain is Nuclear cap-binding protein subunit 3 (618 aa).

Residues 1 to 53 (MAAVRGLRVSVKAGGGAEPEPMEVEEGEVEAAAGRTSPVEATADQTSPREVVP) form a disordered region. A compositionally biased stretch (acidic residues) spans 20 to 29 (EPMEVEEGEV). An RNA recognition motif (RRM) domain region spans residues 117–178 (ETLYICGVDE…LSSKPTNEKG (62 aa)). The WLDD motif; essential for 7-methylguanosine-containing mRNA cap binding motif lies at 146 to 149 (WLDD). Disordered regions lie at residues 170–250 (SSKP…DLRP), 342–366 (PEEP…DDRV), and 426–618 (QLKT…DTDS). Over residues 174 to 188 (TNEKGQRKKDGEHRS) the composition is skewed to basic and acidic residues. Over residues 205–223 (DETEEGEVEEDNPNDAEVE) the composition is skewed to acidic residues. A compositionally biased stretch (polar residues) spans 231-240 (PPETLSQAEQ). Residues 344 to 365 (EPIEEEEEEEEEEEEDMDEDDR) are compositionally biased toward acidic residues. Residues 436-450 (SDSAGNSVKSRIGSK) show a composition bias toward polar residues. Residues 451-468 (SHSEKPADVRLILEEKRQ) show a composition bias toward basic and acidic residues. Residues 469-481 (STASRQQSSSSGK) show a composition bias toward low complexity. 3 stretches are compositionally biased toward basic and acidic residues: residues 507 to 517 (SRREPLSDVHS), 550 to 562 (PKEK…KSGE), and 583 to 596 (IKEK…KSRL). Low complexity predominate over residues 609 to 618 (ESSSGSDTDS).

Belongs to the NCBP3 family. Component of an alternative cap-binding complex (CBC) composed of NCBP1/CBP80 and NCBP3.

It localises to the nucleus. The protein resides in the cytoplasm. Associates with NCBP1/CBP80 to form an alternative cap-binding complex (CBC) which plays a key role in mRNA export. NCBP3 serves as adapter protein linking the capped RNAs (m7GpppG-capped RNA) to NCBP1/CBP80. Unlike the conventional CBC with NCBP2 which binds both small nuclear RNA (snRNA) and messenger (mRNA) and is involved in their export from the nucleus, the alternative CBC with NCBP3 does not bind snRNA and associates only with mRNA thereby playing a role in only mRNA export. This Xenopus laevis (African clawed frog) protein is Nuclear cap-binding protein subunit 3.